Consider the following 158-residue polypeptide: NAD(P)H-quinone oxidoreductase subunit J, chloroplastic (158 aa).

It belongs to the complex I 30 kDa subunit family. As to quaternary structure, NDH is composed of at least 16 different subunits, 5 of which are encoded in the nucleus.

It is found in the plastid. It localises to the chloroplast thylakoid membrane. It catalyses the reaction a plastoquinone + NADH + (n+1) H(+)(in) = a plastoquinol + NAD(+) + n H(+)(out). The catalysed reaction is a plastoquinone + NADPH + (n+1) H(+)(in) = a plastoquinol + NADP(+) + n H(+)(out). NDH shuttles electrons from NAD(P)H:plastoquinone, via FMN and iron-sulfur (Fe-S) centers, to quinones in the photosynthetic chain and possibly in a chloroplast respiratory chain. The immediate electron acceptor for the enzyme in this species is believed to be plastoquinone. Couples the redox reaction to proton translocation, and thus conserves the redox energy in a proton gradient. The chain is NAD(P)H-quinone oxidoreductase subunit J, chloroplastic from Drimys granadensis.